The chain runs to 486 residues: CUGBP Elav-like family member 5 (486 aa).

Residues 1–11 (MARLTEREARR) show a composition bias toward basic and acidic residues. Residues 1-39 (MARLTEREARRQQQQHPPQQQQPRACPMSGPEPPAQQSD) are disordered. Low complexity predominate over residues 12–24 (QQQQHPPQQQQPR). 3 RRM domains span residues 47–128 (IKLF…PADS), 135–215 (RKLF…FADT), and 401–479 (CNLF…LKRP).

The protein belongs to the CELF/BRUNOL family.

Its subcellular location is the nucleus. The protein resides in the cytoplasm. Its function is as follows. RNA-binding protein that may be implicated in the regulation of pre-mRNA alternative splicing. This chain is CUGBP Elav-like family member 5 (celf5), found in Xenopus tropicalis (Western clawed frog).